The following is an 871-amino-acid chain: Transient receptor potential cation channel subfamily V member 4 (871 aa).

Positions 1 to 68 are disordered; it reads MADSSEGPRA…GPGDGRPNLR (68 aa). The Cytoplasmic segment spans residues 1–469; sequence MADSSEGPRA…RDKWRKFGAV (469 aa). Residue Tyr-110 is modified to Phosphotyrosine. ATP contacts are provided by residues Lys-192, Lys-197, Asn-201, 236–239, and Arg-248; that span reads YRGQ. ANK repeat units lie at residues 237–266 and 284–313; these read RGQT…DVHA and FGEL…KKAD. 249–251 is an a 1,2-diacyl-sn-glycero-3-phospho-(1D-myo-inositol-4,5-bisphosphate) binding site; the sequence is RCK. Tyr-253 carries the post-translational modification Phosphotyrosine. Residues 296-299 and Lys-344 contribute to the a 1,2-diacyl-sn-glycero-3-phospho-(1D-myo-inositol-4,5-bisphosphate) site; that span reads NQPH. An ANK 3 repeat occupies 369–398; it reads DGLSPLMMAAKTGKIGIFQHIIRREVTDED. The helical transmembrane segment at 470 to 490 threads the bilayer; sequence SFYINVVSYLCAMVIFTLTAY. The Extracellular portion of the chain corresponds to 491–507; that stretch reads YQPLEGTPPYPYRTTVD. A helical membrane pass occupies residues 508–534; that stretch reads YLRLAGEVITLFTGVLFFFTNIKDLFM. The Cytoplasmic segment spans residues 535 to 547; the sequence is KKCPGVNSLFIDG. The helical transmembrane segment at 548-568 threads the bilayer; it reads SFQLLYFIYSVLVIVSAALYL. Over 569-572 the chain is Extracellular; sequence AGIE. The chain crosses the membrane as a helical span at residues 573–593; the sequence is AYLAVMVFALVLGWMNALYFT. Residues 594–608 are Cytoplasmic-facing; sequence RGLKLTGTYSIMIQK. The helical transmembrane segment at 609–636 threads the bilayer; it reads ILFKDLFRFLLVYLLFMIGYASALVSLL. At 637–665 the chain is on the extracellular side; sequence NPCANMKVCNEDQTNCTVPTYPSCRDSET. Positions 666-685 form an intramembrane region, pore-forming; it reads FSTFLLDLFKLTIGMGDLEM. The Selectivity filter signature appears at 679-682; sequence GMGD. Asp-682 contacts Ca(2+). At 686 to 693 the chain is on the extracellular side; that stretch reads LSSTKYPV. A helical membrane pass occupies residues 694-722; the sequence is VFIILLVTYIILTFVLLLNMLIALMGETV. Over 723–871 the chain is Cytoplasmic; sequence GQVSKESKHI…RKWRTDDAPL (149 aa). Tyr-805 is subject to Phosphotyrosine. The interaction with calmodulin and ITPR3 stretch occupies residues 812–831; the sequence is HTVGRLRRDRWSSVVPRVVE. Ser-824 carries the phosphoserine modification. Positions 849–871 are disordered; it reads GNPRCDGHQQGYPRKWRTDDAPL.

It belongs to the transient receptor (TC 1.A.4) family. TrpV subfamily. TRPV4 sub-subfamily. Homotetramer. Self-associates in an isoform-specific manner. Isoform 1 and isoform 5 can oligomerize, but isoform 2, isoform 4 and isoform 6 cannot oligomerize. Interacts with calmodulin. Interacts with Map7 and Src family Tyr protein kinases LYN, SRC, FYN, HCK, LCK and YES. Interacts with CTNNB1. The TRPV4 and CTNNB1 complex can interact with CDH1. Interacts with PACSIN1, PACSIN2 and PACSIN3 (via SH3 domain). Part of a complex containing MLC1, AQP4, HEPACAM and ATP1B1. Interacts with ITPR3. Interacts with AQP5; the interaction is probably indirect and regulates TRPV4 activation by hypotonicity. Interacts with ANO1. Interacts (via C-terminus) with PKD2 (via C-terminus). Interacts with DDX3X; this interaction is decreased when the channel is activated. In terms of processing, N-glycosylated. In terms of tissue distribution, found in the synoviocytes from patients with (RA) and without (CTR) rheumatoid arthritis (at protein level).

Its subcellular location is the cell membrane. The protein localises to the apical cell membrane. It localises to the cell junction. It is found in the adherens junction. The protein resides in the cell projection. Its subcellular location is the cilium. The protein localises to the endoplasmic reticulum. The enzyme catalyses Ca(2+)(in) = Ca(2+)(out). With respect to regulation, channel activation is inhibited by binding to phosphatidylinositol-4,5-bisphosphate, and to a much lesser degree by phosphatidylinositol-3,4,5-trisphosphate. Not inhibited by phosphatidylinositol-3,4-bisphosphate and phosphatidylinositol-3,5-bisphosphate. In terms of biological role, non-selective calcium permeant cation channel involved in osmotic sensitivity and mechanosensitivity. Activation by exposure to hypotonicity within the physiological range exhibits an outward rectification. Also activated by heat, low pH, citrate and phorbol esters. Increase of intracellular Ca(2+) potentiates currents. Channel activity seems to be regulated by a calmodulin-dependent mechanism with a negative feedback mechanism. Promotes cell-cell junction formation in skin keratinocytes and plays an important role in the formation and/or maintenance of functional intercellular barriers. Acts as a regulator of intracellular Ca(2+) in synoviocytes. Plays an obligatory role as a molecular component in the nonselective cation channel activation induced by 4-alpha-phorbol 12,13-didecanoate and hypotonic stimulation in synoviocytes and also regulates production of IL-8. Together with PKD2, forms mechano- and thermosensitive channels in cilium. Negatively regulates expression of PPARGC1A, UCP1, oxidative metabolism and respiration in adipocytes. Regulates expression of chemokines and cytokines related to pro-inflammatory pathway in adipocytes. Together with AQP5, controls regulatory volume decrease in salivary epithelial cells. Required for normal development and maintenance of bone and cartilage. In its inactive state, may sequester DDX3X at the plasma membrane. When activated, the interaction between both proteins is affected and DDX3X relocalizes to the nucleus. In neurons of the central nervous system, could play a role in triggering voluntary water intake in response to increased sodium concentration in body fluid. Functionally, non-selective calcium permeant cation channel involved in osmotic sensitivity and mechanosensitivity. Activation by exposure to hypotonicity within the physiological range exhibits an outward rectification. Also activated by phorbol esters. Has the same channel activity as isoform 1, and is activated by the same stimuli. Lacks channel activity, due to impaired oligomerization and intracellular retention. Its function is as follows. (Microbial infection) Facilitates hepatitis C virus (HCV) replication, possibly through its action on DDX3X. In terms of biological role, (Microbial infection) Facilitates Dengue virus (DENV) replication, possibly through its action on DDX3X. Functionally, (Microbial infection) Facilitates Zika virus (ZIKV) replication, possibly through its action on DDX3X. In Homo sapiens (Human), this protein is Transient receptor potential cation channel subfamily V member 4 (TRPV4).